The following is a 396-amino-acid chain: 1-deoxy-D-xylulose 5-phosphate reductoisomerase (396 aa).

Threonine 13, glycine 14, serine 15, isoleucine 16, and asparagine 127 together coordinate NADPH. Residue lysine 128 participates in 1-deoxy-D-xylulose 5-phosphate binding. Glutamate 129 provides a ligand contact to NADPH. Residue aspartate 153 coordinates Mn(2+). Residues serine 154, glutamate 155, serine 184, and histidine 207 each contribute to the 1-deoxy-D-xylulose 5-phosphate site. Glutamate 155 provides a ligand contact to Mn(2+). NADPH is bound at residue glycine 213. Residues serine 220, asparagine 225, lysine 226, and glutamate 229 each coordinate 1-deoxy-D-xylulose 5-phosphate. A Mn(2+)-binding site is contributed by glutamate 229.

Belongs to the DXR family. The cofactor is Mg(2+). It depends on Mn(2+) as a cofactor.

The enzyme catalyses 2-C-methyl-D-erythritol 4-phosphate + NADP(+) = 1-deoxy-D-xylulose 5-phosphate + NADPH + H(+). It participates in isoprenoid biosynthesis; isopentenyl diphosphate biosynthesis via DXP pathway; isopentenyl diphosphate from 1-deoxy-D-xylulose 5-phosphate: step 1/6. Functionally, catalyzes the NADPH-dependent rearrangement and reduction of 1-deoxy-D-xylulose-5-phosphate (DXP) to 2-C-methyl-D-erythritol 4-phosphate (MEP). The sequence is that of 1-deoxy-D-xylulose 5-phosphate reductoisomerase from Pseudomonas aeruginosa (strain UCBPP-PA14).